We begin with the raw amino-acid sequence, 293 residues long: Mitochondrial inner membrane protease atp23 (293 aa).

Residues 1–51 (MSPAPTTSAGPASSGIPPSSLPTSTVTEDDTKPSSSSSKANDLLPRYLTND) are disordered. Over residues 8 to 22 (SAGPASSGIPPSSLP) the composition is skewed to low complexity. Histidine 190 provides a ligand contact to a divalent metal cation. Residue glutamate 191 is part of the active site. Histidine 194 contacts a divalent metal cation.

This sequence belongs to the peptidase M76 family.

It is found in the mitochondrion inner membrane. Its function is as follows. Has a dual role in the assembly of mitochondrial ATPase. Acts as a protease that removes N-terminal residues of mitochondrial ATPase CF(0) subunit 6 at the intermembrane space side. Also involved in the correct assembly of the membrane-embedded ATPase CF(0) particle, probably mediating association of subunit 6 with the subunit 9 ring. The protein is Mitochondrial inner membrane protease atp23 (atp23) of Neurospora crassa (strain ATCC 24698 / 74-OR23-1A / CBS 708.71 / DSM 1257 / FGSC 987).